Consider the following 117-residue polypeptide: UPF0642 protein C32H8.05 (117 aa).

The disordered stretch occupies residues 39–117 (DQVNDLTKSS…SNFSKFLKKK (79 aa)). Residues 93 to 106 (KWAKKHLKKGKRAK) are compositionally biased toward basic residues. The span at 107–117 (NSNFSKFLKKK) shows a compositional bias: low complexity.

Belongs to the UPF0642 family.

Its subcellular location is the nucleus. The protein localises to the nucleolus. The polypeptide is UPF0642 protein C32H8.05 (Schizosaccharomyces pombe (strain 972 / ATCC 24843) (Fission yeast)).